The following is a 297-amino-acid chain: 3-mercaptopyruvate sulfurtransferase (297 aa).

Alanine 2 carries the post-translational modification N-acetylalanine. Serine 3, tryptophan 15, proline 23, and serine 35 each carry phosphoserine. The Rhodanese 1 domain maps to 25–144 (AGQPLQLLDA…WLRQNLPLSS (120 aa)). Position 40 is an N6-acetyllysine; alternate (lysine 40). Lysine 40 is modified (N6-succinyllysine; alternate). Residues 145 to 160 (GKSQPAPAEFRAQLDP) form a hinge region. Lysine 146 and lysine 164 each carry N6-succinyllysine. Residues 174 to 288 (ESRRFQVVDS…WYMRARPEDV (115 aa)) enclose the Rhodanese 2 domain. Arginine 188 contributes to the substrate binding site. The Cysteine persulfide intermediate role is filled by cysteine 248.

In terms of assembly, monomer (active form). Homodimer; disulfide-linked (inactive form).

The protein resides in the cytoplasm. It localises to the mitochondrion. The protein localises to the synapse. Its subcellular location is the synaptosome. It carries out the reaction 2-oxo-3-sulfanylpropanoate + [thioredoxin]-dithiol = [thioredoxin]-disulfide + hydrogen sulfide + pyruvate + H(+). Its activity is regulated as follows. By oxidative stress, and thioredoxin. Under oxidative stress conditions, the catalytic cysteine site is converted to a sulfenate which inhibits the MPST enzyme activity. Reduced thioredoxin cleaves an intersubunit disulfide bond to turn on the redox switch and reactivate the enzyme. In terms of biological role, transfer of a sulfur ion to cyanide or to other thiol compounds. Also has weak rhodanese activity. Detoxifies cyanide and is required for thiosulfate biosynthesis. Acts as an antioxidant. In combination with cysteine aminotransferase (CAT), contributes to the catabolism of cysteine and is an important producer of hydrogen sulfide in the brain, retina and vascular endothelial cells. Hydrogen sulfide H(2)S is an important synaptic modulator, signaling molecule, smooth muscle contractor and neuroprotectant. Its production by the 3MST/CAT pathway is regulated by calcium ions. This Homo sapiens (Human) protein is 3-mercaptopyruvate sulfurtransferase (MPST).